A 92-amino-acid polypeptide reads, in one-letter code: Small ribosomal subunit protein uS19c (92 aa).

The protein belongs to the universal ribosomal protein uS19 family.

The protein localises to the plastid. It localises to the chloroplast. Functionally, protein S19 forms a complex with S13 that binds strongly to the 16S ribosomal RNA. The protein is Small ribosomal subunit protein uS19c of Cyanidium caldarium (Red alga).